A 414-amino-acid polypeptide reads, in one-letter code: Glucose-1-phosphate adenylyltransferase (414 aa).

Alpha-D-glucose 1-phosphate is bound by residues Tyr103, Gly168, 183–184 (EK), and Ser201.

This sequence belongs to the bacterial/plant glucose-1-phosphate adenylyltransferase family. Homotetramer.

It carries out the reaction alpha-D-glucose 1-phosphate + ATP + H(+) = ADP-alpha-D-glucose + diphosphate. The protein operates within glycan biosynthesis; glycogen biosynthesis. In terms of biological role, involved in the biosynthesis of ADP-glucose, a building block required for the elongation reactions to produce glycogen. Catalyzes the reaction between ATP and alpha-D-glucose 1-phosphate (G1P) to produce pyrophosphate and ADP-Glc. This chain is Glucose-1-phosphate adenylyltransferase, found in Thermus caldophilus.